The primary structure comprises 217 residues: Large ribosomal subunit protein uL1A (217 aa).

At serine 2 the chain carries N-acetylserine. The residue at position 47 (lysine 47) is an N6-methyllysine; by RKM5. A phosphoserine mark is found at serine 79 and serine 86.

It belongs to the universal ribosomal protein uL1 family. As to quaternary structure, component of the large ribosomal subunit (LSU). Mature yeast ribosomes consist of a small (40S) and a large (60S) subunit. The 40S small subunit contains 1 molecule of ribosomal RNA (18S rRNA) and 33 different proteins (encoded by 57 genes). The large 60S subunit contains 3 rRNA molecules (25S, 5.8S and 5S rRNA) and 46 different proteins (encoded by 81 genes). uL1 forms part of the L1 stalk. In terms of processing, N-terminally acetylated by acetyltransferase NatA.

Its subcellular location is the cytoplasm. Component of the ribosome, a large ribonucleoprotein complex responsible for the synthesis of proteins in the cell. The small ribosomal subunit (SSU) binds messenger RNAs (mRNAs) and translates the encoded message by selecting cognate aminoacyl-transfer RNA (tRNA) molecules. The large subunit (LSU) contains the ribosomal catalytic site termed the peptidyl transferase center (PTC), which catalyzes the formation of peptide bonds, thereby polymerizing the amino acids delivered by tRNAs into a polypeptide chain. The nascent polypeptides leave the ribosome through a tunnel in the LSU and interact with protein factors that function in enzymatic processing, targeting, and the membrane insertion of nascent chains at the exit of the ribosomal tunnel. uL1 forms part of the L1 stalk, a mobile element that plays a role in evacuating the exit-site tRNA. In Saccharomyces cerevisiae (strain ATCC 204508 / S288c) (Baker's yeast), this protein is Large ribosomal subunit protein uL1A.